The following is a 333-amino-acid chain: Trimethylamine N-oxide-binding protein (333 aa).

A signal peptide spans 1 to 42 (MRLFREIAANDPGPTGRMKNMKTFTTALATGVLALCPLAALA). Trimethylamine N-oxide is bound by residues tryptophan 55, tryptophan 102, glutamate 131, tryptophan 177, and tryptophan 222. 5 residues coordinate Ca(2+): proline 249, valine 251, asparagine 254, alanine 257, and aspartate 260.

The complex is probably composed of two ATP-binding proteins (TmoW), two transmembrane proteins (TmoV) and a solute-binding protein (TmoX). Monomer in solution, but forms homodimers in crystals.

It is found in the periplasm. Binds a Ca(2+) ion, which has little effect on either the binding affinity or the secondary structure, but plays an important role in maintaining the stability of TmoX. It may modulate the protein stability in response to biological needs and environmental changes. Thermostability is dramatically decreased when Ca(2+) is removed by EDTA. In terms of biological role, part of the ABC transporter complex TmoXWV involved in trimethylamine N-oxide (TMAO) import. Is specific for TMAO and essential for TMAO metabolism. Binds TMAO with high affinity. In vitro, also presents a high binding affinity for choline, however this transporter seems specific for TMAO and the choline-binding affinity presented by recombinant TmoX may not make physiological sense. In Ruegeria pomeroyi (strain ATCC 700808 / DSM 15171 / DSS-3) (Silicibacter pomeroyi), this protein is Trimethylamine N-oxide-binding protein.